Reading from the N-terminus, the 394-residue chain is Acryloyl-CoA reductase (NADH) (394 aa).

FAD is bound by residues 135 to 144 (FALTEPNAGS) and 170 to 172 (FIS). Position 144 (serine 144) interacts with substrate. 254–257 (DGAR) is a substrate binding site. FAD is bound by residues arginine 282, glutamine 293, and 350–354 (QIHGG). Glutamate 377 (proton acceptor) is an active-site residue. Glycine 378 is a substrate binding site. Residue 379–381 (TSE) participates in FAD binding.

In terms of assembly, heterohexadecamer; tetramer of tetramers. Each tetramer is composed of 2 alpha (AcrC), a beta (AcrA) and a gamma (AcrB) subunit. Requires FAD as cofactor.

It is found in the cytoplasm. It catalyses the reaction propanoyl-CoA + NAD(+) = acryloyl-CoA + NADH + H(+). Functionally, probable catalytic subunit of the acryloyl-CoA reductase complex involved in the pathway of L-alanine fermentation. Catalyzes the irreversible NADH-dependent formation of propionyl-CoA from acryloyl-CoA. It can also use 3-buten-2-one as substrate. The chain is Acryloyl-CoA reductase (NADH) (acrC) from Anaerotignum propionicum (Clostridium propionicum).